The primary structure comprises 244 residues: Small ribosomal subunit protein uS3 (244 aa).

The region spanning 39-110 (IRNFIQKKYS…QVRINVVEVE (72 aa)) is the KH type-2 domain. The disordered stretch occupies residues 221-244 (GAIPRRKGSRKPQQFEDRSSNENS). A compositionally biased stretch (basic and acidic residues) spans 233–244 (QQFEDRSSNENS).

It belongs to the universal ribosomal protein uS3 family. Part of the 30S ribosomal subunit. Forms a tight complex with proteins S10 and S14.

Binds the lower part of the 30S subunit head. Binds mRNA in the 70S ribosome, positioning it for translation. The protein is Small ribosomal subunit protein uS3 of Prochlorococcus marinus (strain MIT 9515).